The chain runs to 234 residues: Purine nucleoside phosphorylase DeoD-type (234 aa).

Position 4 (histidine 4) interacts with a purine D-ribonucleoside. Phosphate-binding positions include glycine 20, arginine 24, arginine 43, and 87–90; that span reads RIGS. A purine D-ribonucleoside contacts are provided by residues glutamate 162, 179–181, and 203–204; these read EME and SD. Residue aspartate 204 is the Proton donor of the active site.

It belongs to the PNP/UDP phosphorylase family. In terms of assembly, homohexamer; trimer of homodimers.

It carries out the reaction a purine D-ribonucleoside + phosphate = a purine nucleobase + alpha-D-ribose 1-phosphate. The enzyme catalyses a purine 2'-deoxy-D-ribonucleoside + phosphate = a purine nucleobase + 2-deoxy-alpha-D-ribose 1-phosphate. Catalyzes the reversible phosphorolytic breakdown of the N-glycosidic bond in the beta-(deoxy)ribonucleoside molecules, with the formation of the corresponding free purine bases and pentose-1-phosphate. The chain is Purine nucleoside phosphorylase DeoD-type from Jannaschia sp. (strain CCS1).